The following is a 334-amino-acid chain: Ketol-acid reductoisomerase (NADP(+)) (334 aa).

One can recognise a KARI N-terminal Rossmann domain in the interval 1–181 (MNIYYDKNAD…GGGRTGILET (181 aa)). Residues 24–27 (YGSQ), arginine 47, serine 50, serine 52, and 82–85 (DEFQ) each bind NADP(+). The active site involves histidine 107. Glycine 133 contacts NADP(+). In terms of domain architecture, KARI C-terminal knotted spans 182-323 (SFKDETETDL…ESLRSMMPWI (142 aa)). Mg(2+) is bound by residues aspartate 190, glutamate 194, glutamate 226, and glutamate 230. Position 251 (serine 251) interacts with substrate.

It belongs to the ketol-acid reductoisomerase family. Requires Mg(2+) as cofactor.

The enzyme catalyses (2R)-2,3-dihydroxy-3-methylbutanoate + NADP(+) = (2S)-2-acetolactate + NADPH + H(+). It carries out the reaction (2R,3R)-2,3-dihydroxy-3-methylpentanoate + NADP(+) = (S)-2-ethyl-2-hydroxy-3-oxobutanoate + NADPH + H(+). It participates in amino-acid biosynthesis; L-isoleucine biosynthesis; L-isoleucine from 2-oxobutanoate: step 2/4. It functions in the pathway amino-acid biosynthesis; L-valine biosynthesis; L-valine from pyruvate: step 2/4. Functionally, involved in the biosynthesis of branched-chain amino acids (BCAA). Catalyzes an alkyl-migration followed by a ketol-acid reduction of (S)-2-acetolactate (S2AL) to yield (R)-2,3-dihydroxy-isovalerate. In the isomerase reaction, S2AL is rearranged via a Mg-dependent methyl migration to produce 3-hydroxy-3-methyl-2-ketobutyrate (HMKB). In the reductase reaction, this 2-ketoacid undergoes a metal-dependent reduction by NADPH to yield (R)-2,3-dihydroxy-isovalerate. This chain is Ketol-acid reductoisomerase (NADP(+)), found in Vesicomyosocius okutanii subsp. Calyptogena okutanii (strain HA).